We begin with the raw amino-acid sequence, 677 residues long: Heat shock transcription factor (677 aa).

2 disordered regions span residues 1 to 56 (MGHN…DDSN) and 115 to 164 (STSS…SQQP). Polar residues-rich tracts occupy residues 115–131 (STSS…TNAT) and 143–164 (QPSS…SQQP). The DNA-binding element occupies 193–297 (ARPAFVNKLW…EYLLENIVRQ (105 aa)). Positions 320-373 (ELETVKYNQLAIAEDLKRITKDNEMLWKENMMARERHQSQQQVLEKLLRFLSSV) are involved in trimerization. 2 stretches are compositionally biased toward low complexity: residues 400-416 (NHMS…INPN) and 457-501 (RSMS…QGQQ). Disordered regions lie at residues 400–444 (NHMS…VPLQ), 457–541 (RSMS…NQYS), and 606–677 (KLNP…RRAA). An activatory region spans residues 466-677 (NLNQRQSPQN…NNGQKRRRAA (212 aa)). Composition is skewed to polar residues over residues 502–541 (FSYP…NQYS) and 629–641 (FANT…SEQP). The segment covering 650-669 (EELRNSRLHEPDRSFEEKNN) has biased composition (basic and acidic residues).

Belongs to the HSF family. In terms of assembly, homotrimer. Homotrimerization increases the affinity of HSF1 to DNA. Post-translationally, exhibits temperature-dependent phosphorylation.

The protein localises to the nucleus. In terms of biological role, DNA-binding transcription factor that specifically binds heat shock promoter elements (HSE) and activates transcription. This is Heat shock transcription factor from Kluyveromyces lactis (strain ATCC 8585 / CBS 2359 / DSM 70799 / NBRC 1267 / NRRL Y-1140 / WM37) (Yeast).